A 170-amino-acid polypeptide reads, in one-letter code: Probable calcium-binding protein CML29 (170 aa).

3 consecutive EF-hand domains span residues 27-62, 63-98, and 138-170; these read SYIS…LGLD, KPEH…GQLG, and ASVE…AQLL. The Ca(2+) site is built by Asp-40, Asp-42, Asp-44, Glu-51, Asp-76, Asp-78, Asp-80, Lys-82, Glu-87, Asp-151, Asp-153, Asp-155, and Glu-162.

Functionally, potential calcium sensor. This is Probable calcium-binding protein CML29 (CML29) from Oryza sativa subsp. japonica (Rice).